Reading from the N-terminus, the 528-residue chain is Exodeoxyribonuclease 7 large subunit (528 aa).

A disordered region spans residues 486 to 528 (QGDRDAVIDGESSGVLPPSAAPAPTRPTPRPKPASSSDQGSLF). Positions 504 to 517 (SAAPAPTRPTPRPK) are enriched in pro residues.

This sequence belongs to the XseA family. Heterooligomer composed of large and small subunits.

The protein resides in the cytoplasm. It carries out the reaction Exonucleolytic cleavage in either 5'- to 3'- or 3'- to 5'-direction to yield nucleoside 5'-phosphates.. Functionally, bidirectionally degrades single-stranded DNA into large acid-insoluble oligonucleotides, which are then degraded further into small acid-soluble oligonucleotides. In Caulobacter sp. (strain K31), this protein is Exodeoxyribonuclease 7 large subunit.